Reading from the N-terminus, the 354-residue chain is Ferrochelatase (354 aa).

Fe cation is bound by residues His214 and Glu295.

This sequence belongs to the ferrochelatase family.

The protein localises to the cytoplasm. The enzyme catalyses heme b + 2 H(+) = protoporphyrin IX + Fe(2+). It functions in the pathway porphyrin-containing compound metabolism; protoheme biosynthesis; protoheme from protoporphyrin-IX: step 1/1. Functionally, catalyzes the ferrous insertion into protoporphyrin IX. The polypeptide is Ferrochelatase (Burkholderia ambifaria (strain MC40-6)).